A 250-amino-acid chain; its full sequence is 5'-nucleotidase SurE (250 aa).

A divalent metal cation is bound by residues Asp8, Asp9, Ser39, and Asn95.

It belongs to the SurE nucleotidase family. The cofactor is a divalent metal cation.

It localises to the cytoplasm. It catalyses the reaction a ribonucleoside 5'-phosphate + H2O = a ribonucleoside + phosphate. Functionally, nucleotidase that shows phosphatase activity on nucleoside 5'-monophosphates. This is 5'-nucleotidase SurE from Cupriavidus necator (strain ATCC 17699 / DSM 428 / KCTC 22496 / NCIMB 10442 / H16 / Stanier 337) (Ralstonia eutropha).